The following is an 89-amino-acid chain: MALTQEQKMEIISKYQLHEKDTGSPEVQIAILTERINQLTEHLKVHKKDFHSRRGLLKMVGQRRSLLNYLKRKDFERYRAIVEKLGLRK.

It belongs to the universal ribosomal protein uS15 family. In terms of assembly, part of the 30S ribosomal subunit. Forms a bridge to the 50S subunit in the 70S ribosome, contacting the 23S rRNA.

In terms of biological role, one of the primary rRNA binding proteins, it binds directly to 16S rRNA where it helps nucleate assembly of the platform of the 30S subunit by binding and bridging several RNA helices of the 16S rRNA. Forms an intersubunit bridge (bridge B4) with the 23S rRNA of the 50S subunit in the ribosome. The sequence is that of Small ribosomal subunit protein uS15 from Carboxydothermus hydrogenoformans (strain ATCC BAA-161 / DSM 6008 / Z-2901).